A 361-amino-acid polypeptide reads, in one-letter code: Histidinol-phosphate aminotransferase (361 aa).

An N6-(pyridoxal phosphate)lysine modification is found at K219.

Belongs to the class-II pyridoxal-phosphate-dependent aminotransferase family. Histidinol-phosphate aminotransferase subfamily. As to quaternary structure, homodimer. Requires pyridoxal 5'-phosphate as cofactor.

It catalyses the reaction L-histidinol phosphate + 2-oxoglutarate = 3-(imidazol-4-yl)-2-oxopropyl phosphate + L-glutamate. Its pathway is amino-acid biosynthesis; L-histidine biosynthesis; L-histidine from 5-phospho-alpha-D-ribose 1-diphosphate: step 7/9. The sequence is that of Histidinol-phosphate aminotransferase from Acinetobacter baumannii (strain SDF).